The sequence spans 437 residues: Rhoptry apical surface protein 2 (437 aa).

The 135-residue stretch at 45–179 (GCLGSLFFYL…PRINLSLHKL (135 aa)) folds into the C2 domain. A PH domain is found at 230–338 (EGPLERLNAN…FIEKLRAYRE (109 aa)). Residues 341 to 437 (STRVPSQKGA…SVVGDEEPQT (97 aa)) are disordered. Positions 375 to 384 (RKSGGKKSRR) are enriched in basic residues.

Interacts with RASP1. Interacts with RASP3.

The protein localises to the cytoplasmic vesicle. Its subcellular location is the secretory vesicle. It localises to the rhoptry membrane. Functionally, essential for tachyzoite invasion of host cells by controlling rhoptry secretion. Binds to phosphatidic acid (PA) and phosphatidylinositol 4,5-bisphosphate (PIP2) lipids and thus, likely contributes to the assembly of the machinery that docks or primes the rhoptry to the parasite cell membrane prior to the fusion with the host cell membrane. The polypeptide is Rhoptry apical surface protein 2 (Toxoplasma gondii (strain ATCC 50853 / GT1)).